Consider the following 128-residue polypeptide: uncharacterized protein (128 aa).

The next 4 helical transmembrane spans lie at Leu-2–Leu-22, Phe-34–Cys-54, Leu-64–Leu-84, and Leu-108–Leu-128.

Its subcellular location is the cell membrane. This is an uncharacterized protein from Treponema pallidum (strain Nichols).